The chain runs to 102 residues: Small ribosomal subunit protein uS10 (102 aa).

The protein belongs to the universal ribosomal protein uS10 family. Part of the 30S ribosomal subunit.

Functionally, involved in the binding of tRNA to the ribosomes. The protein is Small ribosomal subunit protein uS10 of Thermotoga neapolitana (strain ATCC 49049 / DSM 4359 / NBRC 107923 / NS-E).